We begin with the raw amino-acid sequence, 213 residues long: Chloramphenicol acetyltransferase 2 (213 aa).

Residue histidine 189 is the Proton acceptor of the active site.

Belongs to the chloramphenicol acetyltransferase family. In terms of assembly, homotrimer.

The catalysed reaction is chloramphenicol + acetyl-CoA = chloramphenicol 3-acetate + CoA. Its function is as follows. This enzyme is an effector of chloramphenicol resistance in bacteria. The polypeptide is Chloramphenicol acetyltransferase 2 (cmlA) (Escherichia coli).